We begin with the raw amino-acid sequence, 432 residues long: MFDIRAIRDNPDAFRNAWNRRKSGLGSVVDDILKLDAQWREATTAKQDAESARNANSKLIGQAKAKKDEAEAARLMALVAEAKTTMEQAGEAEDNARKALDDLLMGLPNLPLDEVPEGSDEHGNVEQHTWGEPKLINDPKDHADLGEALKGQGGFPMMDFEAAARMSGARFVALRGKLTRLERALANFMLDLQTTEHGYEEMSVPVLVRDQALYGTGQLPKFAEDLFRTTVDHWLTPTAEVSLTNLVREQILDAAQLPLRFTAHTPCFRSEAGSAGRDTKGMIRQHQFNKVELVSIVANEAEGLAELERMTGCAEEVLKRLELPFRRMLLCTGDMGAGARKTYDLEVWLPSQNTYREISSCSYCGDFQARRMDARYRPEPKAKPEYVHTLNGSGLAVGRTLVAVLENYQNADGSITVPKALVPYMGGVEVIN.

238 to 240 (TAE) provides a ligand contact to L-serine. An ATP-binding site is contributed by 269–271 (RSE). Residue Glu-292 participates in L-serine binding. 357 to 360 (EISS) contacts ATP. Residue Ser-393 coordinates L-serine.

The protein belongs to the class-II aminoacyl-tRNA synthetase family. Type-1 seryl-tRNA synthetase subfamily. In terms of assembly, homodimer. The tRNA molecule binds across the dimer.

It is found in the cytoplasm. The catalysed reaction is tRNA(Ser) + L-serine + ATP = L-seryl-tRNA(Ser) + AMP + diphosphate + H(+). The enzyme catalyses tRNA(Sec) + L-serine + ATP = L-seryl-tRNA(Sec) + AMP + diphosphate + H(+). Its pathway is aminoacyl-tRNA biosynthesis; selenocysteinyl-tRNA(Sec) biosynthesis; L-seryl-tRNA(Sec) from L-serine and tRNA(Sec): step 1/1. Functionally, catalyzes the attachment of serine to tRNA(Ser). Is also able to aminoacylate tRNA(Sec) with serine, to form the misacylated tRNA L-seryl-tRNA(Sec), which will be further converted into selenocysteinyl-tRNA(Sec). The protein is Serine--tRNA ligase of Hyphomonas neptunium (strain ATCC 15444).